The primary structure comprises 367 residues: Glutamate 5-kinase (367 aa).

An ATP-binding site is contributed by Lys10. 3 residues coordinate substrate: Ser50, Asp137, and Asn149. ATP-binding positions include 169 to 170 (TD) and 211 to 217 (TGGMSTK). In terms of domain architecture, PUA spans 275–353 (AGEITVDDGA…QQIAEILGYE (79 aa)).

It belongs to the glutamate 5-kinase family.

The protein localises to the cytoplasm. The enzyme catalyses L-glutamate + ATP = L-glutamyl 5-phosphate + ADP. It functions in the pathway amino-acid biosynthesis; L-proline biosynthesis; L-glutamate 5-semialdehyde from L-glutamate: step 1/2. Its function is as follows. Catalyzes the transfer of a phosphate group to glutamate to form L-glutamate 5-phosphate. The sequence is that of Glutamate 5-kinase from Pectobacterium carotovorum subsp. carotovorum (strain PC1).